The sequence spans 1290 residues: Period circadian protein homolog 1 (1290 aa).

The disordered stretch occupies residues 1–134 (MSGPLEGADG…SSEQSARART (134 aa)). An interaction with BTRC region spans residues 1-151 (MSGPLEGADG…LRELKLRLPP (151 aa)). The span at 25-38 (VPSPGPPQHRPCPG) shows a compositional bias: pro residues. Composition is skewed to low complexity over residues 48-57 (NSNGSSGNES) and 64-115 (GASQ…ASSE). Polar residues predominate over residues 116–132 (QDNPSTSGCSSEQSARA). Thr121 carries the phosphothreonine; by CSNK1E modification. Phosphoserine; by CSNK1E is present on residues Ser122 and Ser126. Residues 138 to 147 (LMTALRELKL) carry the Nuclear export signal 1 motif. PAS domains lie at 208 to 275 (ITSE…PSRL) and 348 to 414 (YEAP…KILQ). One can recognise a PAC domain in the interval 422 to 465 (HSPIRFCARNGEYVTMDTSWAGFVHPWSRKVAFVLGRHKVRTAP). The short motif at 489-498 (LSEQIHRLLL) is the Nuclear export signal 2 element. Disordered regions lie at residues 508–544 (GLCG…PAPV) and 646–698 (TTKR…KEPV). Low complexity-rich tracts occupy residues 517 to 533 (SPGP…SNGG) and 652 to 662 (ASSSSYTTSSA). Residues 596–815 (ELEAGSAPVQ…GLDSSSTAPS (220 aa)) form a required for phosphorylation by CSNK1E region. A phosphoserine mark is found at Ser661, Ser663, and Ser704. Disordered stretches follow at residues 749 to 772 (GLAP…APDA), 805 to 874 (RGLD…PPAT), and 938 to 977 (ALQT…FNSR). Residues 751 to 769 (APGPAPSPAPSPTVAPDPA) show a composition bias toward pro residues. Residue Ser815 is modified to Phosphoserine. Residues 827–843 (APPSRRHHCRSKAKRSR) carry the Nuclear localization signal motif. A compositionally biased stretch (basic residues) spans 830 to 847 (SRRHHCRSKAKRSRHHQN). A compositionally biased stretch (pro residues) spans 860 to 874 (SPVPPSTPWPTPPAT). A compositionally biased stretch (low complexity) spans 950–961 (ASHSPSPSLPAL). Ser979 and Ser980 each carry phosphoserine. Positions 982-989 (LQLNLLQL) match the Nuclear export signal 3 motif. Residues 996–1037 (EGAAVAGGPGSSAGPPPPSAEAAEPEARLAEVTESSNQDALS) are disordered. An LXXLL motif is present at residues 1043–1047 (LELLL). Over residues 1051-1062 (SRSGTGSAASGS) the composition is skewed to low complexity. 2 disordered regions span residues 1051-1098 (SRSG…SKYF) and 1207-1290 (SSTQ…NCTS). Gly residues predominate over residues 1063 to 1077 (LGSGLGSGSGSGSHE). Over residues 1078 to 1095 (GGSTSASITRSSQSSHTS) the composition is skewed to low complexity. Residues 1149 to 1290 (SRDMTSVLKQ…ALPTAGNCTS (142 aa)) are CRY binding domain. Residues 1236–1248 (GEQGSSGGGSGEG) show a composition bias toward gly residues.

In terms of assembly, homodimer. Component of the circadian core oscillator, which includes the CRY proteins, CLOCK or NPAS2, BMAL1 or BMAL2, CSNK1D and/or CSNK1E, TIMELESS, and the PER proteins. Interacts directly with TIMELESS, PER2, PER3, CRY1 and CRY2. Interacts with BMAL1 and CLOCK. Interacts with GPRASP1. Interacts (phosphorylated) with BTRC and FBXW11; the interactions trigger proteasomal degradation. Interacts with NONO, WDR5 and SFPQ. Interacts with USP2. Interacts with HNF4A. In terms of processing, phosphorylated on serine residues by CSNK1D, CSNK1E and probably also by CSNK1G2. Phosphorylation by CSNK1D or CSNK1E promotes nuclear location of PER proteins as well as ubiquitination and subsequent degradation. May be dephosphorylated by PP1. Ubiquitinated; requires phosphorylation by CSNK1E and interaction with BTRC and FBXW11. Deubiquitinated by USP2. As to expression, widely expressed. Expressed in hair follicles (at protein level). Found in heart, brain, placenta, lung, liver, skeletal muscle, pancreas, kidney, spleen, thymus, prostate, testis, ovary and small intestine. Highest level in skeletal muscle.

It is found in the nucleus. Its subcellular location is the cytoplasm. Its function is as follows. Transcriptional repressor which forms a core component of the circadian clock. The circadian clock, an internal time-keeping system, regulates various physiological processes through the generation of approximately 24 hour circadian rhythms in gene expression, which are translated into rhythms in metabolism and behavior. It is derived from the Latin roots 'circa' (about) and 'diem' (day) and acts as an important regulator of a wide array of physiological functions including metabolism, sleep, body temperature, blood pressure, endocrine, immune, cardiovascular, and renal function. Consists of two major components: the central clock, residing in the suprachiasmatic nucleus (SCN) of the brain, and the peripheral clocks that are present in nearly every tissue and organ system. Both the central and peripheral clocks can be reset by environmental cues, also known as Zeitgebers (German for 'timegivers'). The predominant Zeitgeber for the central clock is light, which is sensed by retina and signals directly to the SCN. The central clock entrains the peripheral clocks through neuronal and hormonal signals, body temperature and feeding-related cues, aligning all clocks with the external light/dark cycle. Circadian rhythms allow an organism to achieve temporal homeostasis with its environment at the molecular level by regulating gene expression to create a peak of protein expression once every 24 hours to control when a particular physiological process is most active with respect to the solar day. Transcription and translation of core clock components (CLOCK, NPAS2, BMAL1, BMAL2, PER1, PER2, PER3, CRY1 and CRY2) plays a critical role in rhythm generation, whereas delays imposed by post-translational modifications (PTMs) are important for determining the period (tau) of the rhythms (tau refers to the period of a rhythm and is the length, in time, of one complete cycle). A diurnal rhythm is synchronized with the day/night cycle, while the ultradian and infradian rhythms have a period shorter and longer than 24 hours, respectively. Disruptions in the circadian rhythms contribute to the pathology of cardiovascular diseases, cancer, metabolic syndromes and aging. A transcription/translation feedback loop (TTFL) forms the core of the molecular circadian clock mechanism. Transcription factors, CLOCK or NPAS2 and BMAL1 or BMAL2, form the positive limb of the feedback loop, act in the form of a heterodimer and activate the transcription of core clock genes and clock-controlled genes (involved in key metabolic processes), harboring E-box elements (5'-CACGTG-3') within their promoters. The core clock genes: PER1/2/3 and CRY1/2 which are transcriptional repressors form the negative limb of the feedback loop and interact with the CLOCK|NPAS2-BMAL1|BMAL2 heterodimer inhibiting its activity and thereby negatively regulating their own expression. This heterodimer also activates nuclear receptors NR1D1/2 and RORA/B/G, which form a second feedback loop and which activate and repress BMAL1 transcription, respectively. Regulates circadian target genes expression at post-transcriptional levels, but may not be required for the repression at transcriptional level. Controls PER2 protein decay. Represses CRY2 preventing its repression on CLOCK/BMAL1 target genes such as FXYD5 and SCNN1A in kidney and PPARA in liver. Besides its involvement in the maintenance of the circadian clock, has an important function in the regulation of several processes. Participates in the repression of glucocorticoid receptor NR3C1/GR-induced transcriptional activity by reducing the association of NR3C1/GR to glucocorticoid response elements (GREs) by BMAL1:CLOCK. Plays a role in the modulation of the neuroinflammatory state via the regulation of inflammatory mediators release, such as CCL2 and IL6. In spinal astrocytes, negatively regulates the MAPK14/p38 and MAPK8/JNK MAPK cascades as well as the subsequent activation of NFkappaB. Coordinately regulates the expression of multiple genes that are involved in the regulation of renal sodium reabsorption. Can act as gene expression activator in a gene and tissue specific manner, in kidney enhances WNK1 and SLC12A3 expression in collaboration with CLOCK. Modulates hair follicle cycling. Represses the CLOCK-BMAL1 induced transcription of BHLHE40/DEC1. This chain is Period circadian protein homolog 1 (PER1), found in Homo sapiens (Human).